The sequence spans 132 residues: Secreted RxLR effector protein BLR08 (132 aa).

Positions 1–22 (MRHKCLLAMAVVASMAFYSVIS) are cleaved as a signal peptide. Residue Asn-25 is glycosylated (N-linked (GlcNAc...) asparagine). Positions 36-57 (NRRLRPRVEPTANELDKQSDVD) are disordered. The RxLR-dEER signature appears at 37–83 (RRLRPRVEPTANELDKQSDVDTKLEADRRLGYPGESGFMLEGELEER). Residues 111-131 (FFLGLFASVIGVSIISACYGI) form a helical membrane-spanning segment.

Belongs to the RxLR effector family. Interacts with host transcription factor NAC069.

It localises to the secreted. It is found in the host endoplasmic reticulum membrane. Functionally, secreted effector that inhibits stress-induced relocalization of the transcription factor NAC069 to the nucleus, thus affecting its broad role in abiotic and biotic stress responses. The chain is Secreted RxLR effector protein BLR08 from Bremia lactucae (Lettuce downy mildew).